The sequence spans 61 residues: MKGTPSFGKRNKKNHIRCRRCGRNAYNPTKKYCASCGFGRSKRLRRYSWQNKKPVTGKRLK.

Residues Cys-18, Cys-21, Cys-33, and Cys-36 each coordinate Zn(2+). Residues 18–36 (CRRCGRNAYNPTKKYCASC) form a C4-type zinc finger.

It belongs to the eukaryotic ribosomal protein eL37 family. Zn(2+) is required as a cofactor.

Binds to the 23S rRNA. In Methanosphaera stadtmanae (strain ATCC 43021 / DSM 3091 / JCM 11832 / MCB-3), this protein is Large ribosomal subunit protein eL37.